The following is a 538-amino-acid chain: MKRRLFPLTFSAKMMGFIALLIIAMFVLLGVFLNEQYARTLEEQMGERALSVAQAVALIPELREAFSAERPDEIIQPIAESIRVETGAEFIVVGNTDLIRYAHPLPERIGQRMVGGDNERALVHGESYVSKAVGSLGPSIRGKVPVFDDNGKIIGIVSVGFLMEDIQQVIGERLIAMWQIVVVIMILGLMGTWLVANTVKKATLGLEPEEIGQQFQQKEAILQSIHEGVIAVNKEGKVTLFNQAAMKYVDPELDKEDVLGRHVTDLVKHTRLPEVLQVGKGQYDQELRIGDKQAVVNRVPIYYDHEIVGAVATFRDRNEIKKLSEELTNVKNYADALRAQTHEFSNKLNTISGFLQLGKIDEAVDFIQKERKIQQEWIHFFIERVNDPTVSAVLLGKISQAQELGIDVDIDPSSQLLTPLQERQQELLVTMIGNLLENAFDALLASGIENKKIYISFTDMGDDFIFEVEDNGPGIPPQLMESIFEEGFSTKEGTHRGFGLALVKKAVHELGGAIFLEEGELGGACFVLTIPKHEAKEG.

The Cytoplasmic portion of the chain corresponds to 1–13 (MKRRLFPLTFSAK). Residues 14–34 (MMGFIALLIIAMFVLLGVFLN) form a helical membrane-spanning segment. The Extracellular portion of the chain corresponds to 35–174 (EQYARTLEEQ…DIQQVIGERL (140 aa)). A helical transmembrane segment spans residues 175-195 (IAMWQIVVVIMILGLMGTWLV). Residues 196-538 (ANTVKKATLG…TIPKHEAKEG (343 aa)) lie on the Cytoplasmic side of the membrane. In terms of domain architecture, PAS spans 216-282 (QQKEAILQSI…PEVLQVGKGQ (67 aa)). In terms of domain architecture, Histidine kinase spans 339 to 534 (AQTHEFSNKL…CFVLTIPKHE (196 aa)). Histidine 342 is subject to Phosphohistidine; by autocatalysis.

It localises to the cell membrane. The catalysed reaction is ATP + protein L-histidine = ADP + protein N-phospho-L-histidine.. Member of the two-component regulatory system CitT/CitS. Functions probably as a membrane-associated protein kinase that phosphorylates CitT in response to environmental citrate or Mg(2+)-citrate complex. The sequence is that of Sensor protein CitS (citS) from Halalkalibacterium halodurans (strain ATCC BAA-125 / DSM 18197 / FERM 7344 / JCM 9153 / C-125) (Bacillus halodurans).